Here is a 912-residue protein sequence, read N- to C-terminus: Receptor protein kinase WSS1 (912 aa).

Residues 1 to 27 (MGRDARRLPLLPFLLLLLAAAAGVAES) form the signal peptide. Residues 28-477 (ATDAEAIHDL…AGGGKSKPNT (450 aa)) lie on the Extracellular side of the membrane. 3 LRR repeats span residues 64-88 (AGKV…LSSL), 89-111 (TSLT…LARM), and 112-134 (GSLA…FLHG). N-linked (GlcNAc...) asparagine glycans are attached at residues N159, N170, N196, N256, N286, N371, N376, N387, and N400. LRR repeat units follow at residues 184–208 (LVSL…LSSL), 235–261 (MKSL…TQLE), 281–303 (LMSL…AFAA), 364–388 (SSDV…LANL), 389–411 (TRLA…VLTT), and 413–438 (PSLT…SVNV). The segment at 448–472 (SSGSSGGGGGSDGDSSSSDSAGGGK) is disordered. A helical transmembrane segment spans residues 478-498 (GMIIGIIVAVIILFACIALLV). Topologically, residues 499–912 (HHRKKKNVEK…SFNVPRKYNG (414 aa)) are cytoplasmic. Positions 580–859 (FSEDCILGRG…HCVNRLSSLV (280 aa)) constitute a Protein kinase domain. ATP-binding positions include 586 to 594 (LGRGGFGVV) and K607. The active-site Proton acceptor is D708.

This sequence belongs to the protein kinase superfamily. Ser/Thr protein kinase family. The cofactor is Mn(2+). In terms of tissue distribution, expressed in young and mature leaves.

Its subcellular location is the cell membrane. The enzyme catalyses L-seryl-[protein] + ATP = O-phospho-L-seryl-[protein] + ADP + H(+). It catalyses the reaction L-threonyl-[protein] + ATP = O-phospho-L-threonyl-[protein] + ADP + H(+). Functionally, transmembrane kinase receptor involved in the regulation of reactive oxygen species (ROS) homeostasis, chloroplast development and leaf senescence. The sequence is that of Receptor protein kinase WSS1 from Oryza sativa subsp. japonica (Rice).